We begin with the raw amino-acid sequence, 1027 residues long: Multidrug resistance protein MdtC (1027 aa).

12 helical membrane-spanning segments follow: residues 16–36 (LLSLAISLCGALGFMLLPVAP), 333–353 (EVERALAIAVALVILVVFLFL), 360–380 (LIPAVAVPVSLIGTFSAMYLC), 387–407 (LSLMALTVATGFVVDDAIVVL), 431–451 (VGFTVLSMSISLVAVFIPLLL), 463–483 (FAITLTTAIGISLFVSLTLTP), 528–548 (WIMAIFITTLGLNAYLYISAP), 853–873 (LILILAAIVTVYIVLGVLYES), 875–895 (IHPLTILSTLPSAGVGALLAL), 897–917 (LFDTPFSLIALIGIMLLIGIV), 953–973 (PIIMTTLAALFGALPLMLSSG), and 984–1004 (ITIVGGLLMSQLLTLYTTPII).

The protein belongs to the resistance-nodulation-cell division (RND) (TC 2.A.6) family. MdtC subfamily. As to quaternary structure, part of a tripartite efflux system composed of MdtA, MdtB and MdtC. MdtC forms a heteromultimer with MdtB.

The protein localises to the cell inner membrane. This Proteus mirabilis (strain HI4320) protein is Multidrug resistance protein MdtC.